The following is a 288-amino-acid chain: 4-diphosphocytidyl-2-C-methyl-D-erythritol kinase (288 aa).

The active site involves lysine 11. 93–103 serves as a coordination point for ATP; that stretch reads PFGAGLGGGSS. Residue aspartate 135 is part of the active site.

This sequence belongs to the GHMP kinase family. IspE subfamily.

The enzyme catalyses 4-CDP-2-C-methyl-D-erythritol + ATP = 4-CDP-2-C-methyl-D-erythritol 2-phosphate + ADP + H(+). It participates in isoprenoid biosynthesis; isopentenyl diphosphate biosynthesis via DXP pathway; isopentenyl diphosphate from 1-deoxy-D-xylulose 5-phosphate: step 3/6. Its function is as follows. Catalyzes the phosphorylation of the position 2 hydroxy group of 4-diphosphocytidyl-2C-methyl-D-erythritol. The polypeptide is 4-diphosphocytidyl-2-C-methyl-D-erythritol kinase (Chlorobium limicola (strain DSM 245 / NBRC 103803 / 6330)).